A 62-amino-acid chain; its full sequence is Large ribosomal subunit protein bL28 (62 aa).

Residues 1-22 (MAKKCAISGKGPMSGNNVSHAK) form a disordered region.

Belongs to the bacterial ribosomal protein bL28 family.

This is Large ribosomal subunit protein bL28 from Sulfurimonas denitrificans (strain ATCC 33889 / DSM 1251) (Thiomicrospira denitrificans (strain ATCC 33889 / DSM 1251)).